We begin with the raw amino-acid sequence, 204 residues long: MKEEKTMLKIITLGDSNVGKTSLFYHYVNGEYRYNRPPSIGPDYFIKELKVENKHVFLMVWDTCGQERFQAFSPPYFRGANCYTLCFDIHNEESFINLGKWMDEIIKYCYGNIPFVLVGTKSDIPRTDKSISKARIEQWCKNIEDQGIIDKVHYFETSAKLSQNVTELYNVAAKLALEHYSIVKYISIIRPIGPPEEVKVGTCC.

14-21 is a binding site for GTP; sequence GDSNVGKT. The short motif at 36 to 44 is the Effector region element; that stretch reads RPPSIGPDY. GTP-binding positions include 62–66 and 120–123; these read DTCGQ and TKSD. 2 S-geranylgeranyl cysteine lipidation sites follow: cysteine 203 and cysteine 204.

Belongs to the small GTPase superfamily. Rab family.

Its subcellular location is the cell membrane. The sequence is that of Ras-related protein RabL (rabL) from Dictyostelium discoideum (Social amoeba).